A 387-amino-acid chain; its full sequence is Oxidase FUB9 (387 aa).

Residues 1–20 (MSRTNLPIQPAKMSDATSSK) are disordered. The region spanning 18-379 (SSKPQIFSIQ…TPAHLSLLNA (362 aa)) is the FMN hydroxy acid dehydrogenase domain. An a 2-oxocarboxylate-binding site is contributed by Y44. Residues S126, Q150, and T178 each coordinate FMN. R187 is a binding site for a 2-oxocarboxylate. Position 250 (K250) interacts with FMN. H274 serves as the catalytic Proton acceptor. Position 277 (R277) interacts with a 2-oxocarboxylate. Residues 305–309 (DGGFR) and 328–329 (GR) contribute to the FMN site.

Belongs to the FMN-dependent alpha-hydroxy acid dehydrogenase family. The cofactor is FMN.

It participates in mycotoxin biosynthesis. In terms of biological role, oxidase; part of the gene cluster that mediates the biosynthesis of fusaric acid, a mycotoxin with low to moderate toxicity to animals and humans, but with high phytotoxic properties. L-aspartate is suggested as fusaric acid amino acid precursor that is activated and further processed to O-acetyl-L-homoserine by cluster enzymes aspartate kinase FUB3 and homoserine O-acetyltransferase FUB5, as well as enzymes of the primary metabolism. The polyketide synthase (PKS) FUB1 generates the triketide trans-2-hexenal which is presumptively released by the hydrolase FUB4 and linked to the NRPS-bound amino acid precursor by NAD(P)-dependent dehydrogenase FUB6. FUB1, FUB4, and the non-canonical NRPS Fub8 may form an enzyme complex. Further processing of the NRPS-bound intermediate might be carried out by FUB6 and the sulfhydrylase FUB7, enabling a spontaneous electrocyclization to close the carbon backbone of fusaric acid. Dihydrofusaric acid is likely to be released via reduction by the thioester reductase (TR) domain of FUB8 whereupon the final oxidation to fusaric acid may (also) be performed by the FMN-dependent dehydrogenase FUB9. The sequence is that of Oxidase FUB9 from Gibberella moniliformis (strain M3125 / FGSC 7600) (Maize ear and stalk rot fungus).